Here is a 458-residue protein sequence, read N- to C-terminus: Glutamyl-tRNA reductase (458 aa).

Substrate-binding positions include 49–52 (TCNR), serine 109, 114–116 (EQQ), and glutamine 120. Cysteine 50 acts as the Nucleophile in catalysis. 191–196 (GAGAMA) is a binding site for NADP(+).

The protein belongs to the glutamyl-tRNA reductase family. In terms of assembly, homodimer.

It carries out the reaction (S)-4-amino-5-oxopentanoate + tRNA(Glu) + NADP(+) = L-glutamyl-tRNA(Glu) + NADPH + H(+). Its pathway is porphyrin-containing compound metabolism; protoporphyrin-IX biosynthesis; 5-aminolevulinate from L-glutamyl-tRNA(Glu): step 1/2. Functionally, catalyzes the NADPH-dependent reduction of glutamyl-tRNA(Glu) to glutamate 1-semialdehyde (GSA). The protein is Glutamyl-tRNA reductase of Corynebacterium aurimucosum (strain ATCC 700975 / DSM 44827 / CIP 107346 / CN-1) (Corynebacterium nigricans).